Here is a 478-residue protein sequence, read N- to C-terminus: Probable L-ascorbate peroxidase 8, chloroplastic (478 aa).

The span at 1-13 (MAERIAASLLPAA) shows a compositional bias: low complexity. 2 disordered regions span residues 1 to 31 (MAER…VSAA) and 44 to 66 (GGLR…RSGR). A chloroplast-targeting transit peptide spans 1 to 76 (MAERIAASLL…AGAGARAVVR (76 aa)). Pro residues predominate over residues 14-26 (SPSPAPSPPPPRP). H117 acts as the Proton acceptor in catalysis. Residues 245-276 (AHTLGRSRPDRSGWGKPETKYTKDGPGEPGGQ) are disordered. H246 contacts heme b. T247 contacts K(+). Residues 251–270 (SRPDRSGWGKPETKYTKDGP) are compositionally biased toward basic and acidic residues. T279 and D286 together coordinate K(+). The interval 346 to 417 (AKFDPPEGFS…DNNGAAPQPE (72 aa)) is disordered. Residues 369–381 (PAPAPAAAPPPPP) show a composition bias toward pro residues. A compositionally biased stretch (low complexity) spans 394–406 (PVTVGAAVASSPA). Residues 458 to 478 (YFLNIMLLIGGLAFLTSLLGS) form a helical membrane-spanning segment.

The protein belongs to the peroxidase family. Ascorbate peroxidase subfamily. Interacts with SWEET11/OS8N3. Heme b is required as a cofactor. Expressed in roots, leaves, stems and flowers. Expressed in leaves, shoots and panicles. Expressed at low levels in roots.

Its subcellular location is the plastid. It localises to the chloroplast thylakoid membrane. The enzyme catalyses L-ascorbate + H2O2 = L-dehydroascorbate + 2 H2O. In terms of biological role, involved in defense response and tolerance to the bacterial pathogen Xanthomonas oryzae pv. oryzae (Xoo). Plays an important role in hydrogen peroxide removal during infection by Xoo. Involved in response to abiotic stress. Plays a role in hydrogen peroxide removal durings salt stress. In Oryza sativa subsp. japonica (Rice), this protein is Probable L-ascorbate peroxidase 8, chloroplastic.